The primary structure comprises 290 residues: Porphobilinogen deaminase (290 aa).

Cysteine 237 is modified (S-(dipyrrolylmethanemethyl)cysteine).

The protein belongs to the HMBS family. Monomer. It depends on dipyrromethane as a cofactor.

The enzyme catalyses 4 porphobilinogen + H2O = hydroxymethylbilane + 4 NH4(+). It participates in porphyrin-containing compound metabolism; protoporphyrin-IX biosynthesis; coproporphyrinogen-III from 5-aminolevulinate: step 2/4. Its function is as follows. Tetrapolymerization of the monopyrrole PBG into the hydroxymethylbilane pre-uroporphyrinogen in several discrete steps. The sequence is that of Porphobilinogen deaminase from Clostridium kluyveri (strain NBRC 12016).